The following is a 541-amino-acid chain: Membrane protein insertase YidC (541 aa).

A run of 6 helical transmembrane segments spans residues 6-26, 325-345, 349-369, 420-440, 457-477, and 500-520; these read NILL…WQAD, LVVD…LLMF, FVGN…GLLF, GGCL…WVLL, LSVQ…MFVM, and VIFT…WLVG.

The protein belongs to the OXA1/ALB3/YidC family. Type 1 subfamily. As to quaternary structure, interacts with the Sec translocase complex via SecD. Specifically interacts with transmembrane segments of nascent integral membrane proteins during membrane integration.

It localises to the cell inner membrane. Required for the insertion and/or proper folding and/or complex formation of integral membrane proteins into the membrane. Involved in integration of membrane proteins that insert both dependently and independently of the Sec translocase complex, as well as at least some lipoproteins. Aids folding of multispanning membrane proteins. The sequence is that of Membrane protein insertase YidC from Shewanella baltica (strain OS195).